The chain runs to 374 residues: DNA integrity scanning protein DisA (374 aa).

One can recognise a DAC domain in the interval 20-158 (EALMRASLSA…DGERRVLEES (139 aa)). ATP contacts are provided by residues Gly-87, Leu-105, and 118–122 (TRHRT).

Belongs to the DisA family. In terms of assembly, homooctamer. Mg(2+) is required as a cofactor.

It catalyses the reaction 2 ATP = 3',3'-c-di-AMP + 2 diphosphate. In terms of biological role, participates in a DNA-damage check-point that is active prior to asymmetric division when DNA is damaged. DisA forms globular foci that rapidly scan along the chromosomes during sporulation, searching for lesions. When a lesion is present, DisA pauses at the lesion site. This triggers a cellular response that culminates in a temporary block in sporulation initiation. Also has diadenylate cyclase activity, catalyzing the condensation of 2 ATP molecules into cyclic di-AMP (c-di-AMP). c-di-AMP acts as a signaling molecule that couples DNA integrity with progression of sporulation. The rise in c-di-AMP level generated by DisA while scanning the chromosome, operates as a positive signal that advances sporulation; upon encountering a lesion, the DisA focus arrests at the damaged site and halts c-di-AMP synthesis. This is DNA integrity scanning protein DisA from Streptomyces griseus subsp. griseus (strain JCM 4626 / CBS 651.72 / NBRC 13350 / KCC S-0626 / ISP 5235).